Reading from the N-terminus, the 169-residue chain is Ribosome maturation factor RimM (169 aa).

One can recognise a PRC barrel domain in the interval Glu94–Leu166.

Belongs to the RimM family. In terms of assembly, binds ribosomal protein uS19.

Its subcellular location is the cytoplasm. Functionally, an accessory protein needed during the final step in the assembly of 30S ribosomal subunit, possibly for assembly of the head region. Essential for efficient processing of 16S rRNA. May be needed both before and after RbfA during the maturation of 16S rRNA. It has affinity for free ribosomal 30S subunits but not for 70S ribosomes. The chain is Ribosome maturation factor RimM from Corynebacterium efficiens (strain DSM 44549 / YS-314 / AJ 12310 / JCM 11189 / NBRC 100395).